We begin with the raw amino-acid sequence, 300 residues long: Apolipoprotein E (300 aa).

An N-terminal signal peptide occupies residues 1–18 (MKVLWAVLVVTLLAGCQA). The segment at 74–246 (VLMEDTMKEV…RLDEVREQME (173 aa)) is 8 X 22 AA approximate tandem repeats. 8 repeat units span residues 75–95 (LMED…QELA), 96–117 (PMAE…ARLG), 118–139 (ADME…SMLG), 140–161 (HSAE…KRLL), 162–183 (RDAE…EGAE), 184–205 (RSVS…LRTA), 206–224 (ALTS…ERLR), and 225–243 (GRLE…EVRE). Position 137 is a methionine sulfoxide (M137). S141 is subject to Phosphoserine. The interval 152 to 162 (HLRKLRKRLLR) is LDL and other lipoprotein receptors binding. Residue 156-159 (LRKR) participates in heparin binding. The interval 204–274 (TAALTSQPLQ…GWFEPMMEDI (71 aa)) is lipid-binding and lipoprotein association. 220-227 (GERLRGRL) contacts heparin. Positions 262-274 (RLKGWFEPMMEDI) are specificity for association with VLDL.

The protein belongs to the apolipoprotein A1/A4/E family. Homotetramer. May interact with ABCA1; functionally associated with ABCA1 in the biogenesis of HDLs. May interact with APP/A4 amyloid-beta peptide; the interaction is extremely stable in vitro but its physiological significance is unclear. May interact with MAPT. May interact with MAP2. In the cerebrospinal fluid, interacts with secreted SORL1. Interacts with PMEL; this allows the loading of PMEL luminal fragment on ILVs to induce fibril nucleation. APOE exists as multiple glycosylated and sialylated glycoforms within cells and in plasma. The extent of glycosylation and sialylation are tissue and context specific. Post-translationally, glycated in plasma VLDL. In terms of processing, phosphorylated by FAM20C in the extracellular medium.

It is found in the secreted. The protein localises to the extracellular space. It localises to the extracellular matrix. The protein resides in the extracellular vesicle. Its subcellular location is the endosome. It is found in the multivesicular body. Its function is as follows. APOE is an apolipoprotein, a protein associating with lipid particles, that mainly functions in lipoprotein-mediated lipid transport between organs via the plasma and interstitial fluids. APOE is a core component of plasma lipoproteins and is involved in their production, conversion and clearance. Apolipoproteins are amphipathic molecules that interact both with lipids of the lipoprotein particle core and the aqueous environment of the plasma. As such, APOE associates with chylomicrons, chylomicron remnants, very low density lipoproteins (VLDL) and intermediate density lipoproteins (IDL) but shows a preferential binding to high-density lipoproteins (HDL). It also binds a wide range of cellular receptors including the LDL receptor/LDLR, the LDL receptor-related proteins LRP1, LRP2 and LRP8 and the very low-density lipoprotein receptor/VLDLR that mediate the cellular uptake of the APOE-containing lipoprotein particles. Finally, APOE also has a heparin-binding activity and binds heparan-sulfate proteoglycans on the surface of cells, a property that supports the capture and the receptor-mediated uptake of APOE-containing lipoproteins by cells. A main function of APOE is to mediate lipoprotein clearance through the uptake of chylomicrons, VLDLs, and HDLs by hepatocytes. APOE is also involved in the biosynthesis by the liver of VLDLs as well as their uptake by peripheral tissues ensuring the delivery of triglycerides and energy storage in muscle, heart and adipose tissues. By participating in the lipoprotein-mediated distribution of lipids among tissues, APOE plays a critical role in plasma and tissues lipid homeostasis. APOE is also involved in two steps of reverse cholesterol transport, the HDLs-mediated transport of cholesterol from peripheral tissues to the liver, and thereby plays an important role in cholesterol homeostasis. First, it is functionally associated with ABCA1 in the biogenesis of HDLs in tissues. Second, it is enriched in circulating HDLs and mediates their uptake by hepatocytes. APOE also plays an important role in lipid transport in the central nervous system, regulating neuron survival and sprouting. The protein is Apolipoprotein E (APOE) of Dinomys branickii (Pacarana).